We begin with the raw amino-acid sequence, 257 residues long: Acetyl-coenzyme A carboxylase carboxyl transferase subunit beta (257 aa).

One can recognise a CoA carboxyltransferase N-terminal domain in the interval 5-257 (VFTKCERCKQ…DLERLLGFVG (253 aa)). Residues Cys-9, Cys-12, Cys-28, and Cys-31 each contribute to the Zn(2+) site. The C4-type zinc-finger motif lies at 9-31 (CERCKQPVYEKDLRARFNVCPNC).

The protein belongs to the AccD/PCCB family. As to quaternary structure, acetyl-CoA carboxylase is a heterohexamer composed of biotin carboxyl carrier protein (AccB), biotin carboxylase (AccC) and two subunits each of ACCase subunit alpha (AccA) and ACCase subunit beta (AccD). Requires Zn(2+) as cofactor.

Its subcellular location is the cytoplasm. It catalyses the reaction N(6)-carboxybiotinyl-L-lysyl-[protein] + acetyl-CoA = N(6)-biotinyl-L-lysyl-[protein] + malonyl-CoA. It participates in lipid metabolism; malonyl-CoA biosynthesis; malonyl-CoA from acetyl-CoA: step 1/1. Component of the acetyl coenzyme A carboxylase (ACC) complex. Biotin carboxylase (BC) catalyzes the carboxylation of biotin on its carrier protein (BCCP) and then the CO(2) group is transferred by the transcarboxylase to acetyl-CoA to form malonyl-CoA. In Rubrobacter xylanophilus (strain DSM 9941 / JCM 11954 / NBRC 16129 / PRD-1), this protein is Acetyl-coenzyme A carboxylase carboxyl transferase subunit beta.